The chain runs to 634 residues: SPARC-like protein 1 (634 aa).

The signal sequence occupies residues Met1 to Ala16. The disordered stretch occupies residues Ala50 to Asp335. Residues Asp51–Lys62 are compositionally biased toward basic and acidic residues. Phosphoserine is present on residues Ser68, Ser76, and Ser84. Residues His73–Tyr83 show a composition bias toward basic and acidic residues. A compositionally biased stretch (acidic residues) spans Leu89 to Leu99. Over residues Thr131–Asn144 the composition is skewed to polar residues. The N-linked (GlcNAc...) asparagine glycan is linked to Asn144. A phosphoserine mark is found at Ser151 and Ser159. 2 stretches are compositionally biased toward acidic residues: residues Glu189–Asp198 and Asn205–Glu214. The segment covering Gln233–Asp258 has biased composition (polar residues). Ser259 is subject to Phosphoserine. Composition is skewed to basic and acidic residues over residues Gly263–His276 and Gly292–Val303. Residues Ser333 and Ser340 each carry the phosphoserine modification. The tract at residues Glu360–His398 is disordered. Residues Ser366–Glu382 are compositionally biased toward basic and acidic residues. The N-linked (GlcNAc...) asparagine glycan is linked to Asn368. Ser370 and Ser390 each carry phosphoserine. One can recognise a Follistatin-like domain in the interval Ser402 to Cys424. 7 cysteine pairs are disulfide-bonded: Cys403–Cys414, Cys408–Cys424, Cys426–Cys460, Cys432–Cys453, Cys442–Cys479, Cys485–Cys596, and Cys604–Cys620. Residues Gly420 to Ser481 enclose the Kazal-like domain. Asn446 is a glycosylation site (N-linked (GlcNAc...) asparagine). In terms of domain architecture, EF-hand spans Pro592–Asp627. 5 residues coordinate Ca(2+): Asp605, Asn607, Asp609, His611, and Glu616.

It belongs to the SPARC family. In terms of tissue distribution, expressed in many types of neurons in the brain.

The protein localises to the secreted. It is found in the extracellular space. Its subcellular location is the extracellular matrix. This is SPARC-like protein 1 (Sparcl1) from Rattus norvegicus (Rat).